A 146-amino-acid polypeptide reads, in one-letter code: Putative serine protease inhibitor SAV_2156 (146 aa).

Residues 1–26 (MTKTTMAVPGALLAAIALLSAAPAQA) form the signal peptide. 2 disulfides stabilise this stretch: Cys-57/Cys-70 and Cys-90/Cys-120.

Belongs to the protease inhibitor I16 (SSI) family.

It is found in the secreted. The sequence is that of Putative serine protease inhibitor SAV_2156 from Streptomyces avermitilis (strain ATCC 31267 / DSM 46492 / JCM 5070 / NBRC 14893 / NCIMB 12804 / NRRL 8165 / MA-4680).